Here is a 188-residue protein sequence, read N- to C-terminus: MVSISNVSKGAIIRWKGEPHSIESLVHRTPGNLRAFYQASMKNLKTGRNVEYRFSATEQVDVIVTERKKYQYLYRDGEDYVMMDTETFDQINVPEVAIGSASRFIKDAVMVDIVFADDGSILEVELPTFVELEVTETNPASKDDRATSGTKPAIVETGAEVNVPMFIQTGSIIRIDTRSGEYMDRVKK.

This sequence belongs to the elongation factor P family.

The protein resides in the cytoplasm. Its pathway is protein biosynthesis; polypeptide chain elongation. Its function is as follows. Involved in peptide bond synthesis. Stimulates efficient translation and peptide-bond synthesis on native or reconstituted 70S ribosomes in vitro. Probably functions indirectly by altering the affinity of the ribosome for aminoacyl-tRNA, thus increasing their reactivity as acceptors for peptidyl transferase. The polypeptide is Elongation factor P (Chlorobaculum parvum (strain DSM 263 / NCIMB 8327) (Chlorobium vibrioforme subsp. thiosulfatophilum)).